We begin with the raw amino-acid sequence, 495 residues long: Glutamate--tRNA ligase (495 aa).

Positions 12–22 (PSPTGHLHIGN) match the 'HIGH' region motif. The 'KMSKS' region motif lies at 259–263 (KLSKR). Residue K262 participates in ATP binding.

The protein belongs to the class-I aminoacyl-tRNA synthetase family. Glutamate--tRNA ligase type 1 subfamily. As to quaternary structure, monomer.

It is found in the cytoplasm. It catalyses the reaction tRNA(Glu) + L-glutamate + ATP = L-glutamyl-tRNA(Glu) + AMP + diphosphate. Catalyzes the attachment of glutamate to tRNA(Glu) in a two-step reaction: glutamate is first activated by ATP to form Glu-AMP and then transferred to the acceptor end of tRNA(Glu). This is Glutamate--tRNA ligase from Ligilactobacillus salivarius (strain UCC118) (Lactobacillus salivarius).